Reading from the N-terminus, the 875-residue chain is DNA mismatch repair protein MutS (875 aa).

625-632 is a binding site for ATP; sequence GPNMGGKS.

Belongs to the DNA mismatch repair MutS family.

This protein is involved in the repair of mismatches in DNA. It is possible that it carries out the mismatch recognition step. This protein has a weak ATPase activity. In Symbiobacterium thermophilum (strain DSM 24528 / JCM 14929 / IAM 14863 / T), this protein is DNA mismatch repair protein MutS.